The chain runs to 410 residues: Na(+)-translocating NADH-quinone reductase subunit B (410 aa).

The next 3 helical transmembrane spans lie at 56–76 (MMILVWLALFPAMFYGMYNVG), 119–139 (LFGAIYFLPIYATVFIVGGFW), and 159–179 (SILFALIVPPTLPLWQAALGI). Residue threonine 232 is modified to FMN phosphoryl threonine. 5 consecutive transmembrane segments (helical) span residues 266-286 (GSIGEVSTLALLIGGAFIVFA), 293-313 (IIAGVMIGMIAMSSLFNFIGS), 318-338 (MFAMPWYWHLVVGGFAIGMLF), 347-367 (SFTNVGKWWYGALIGVMCVLI), and 377-397 (GMMLAILFANLFAPIFDYFVA).

It belongs to the NqrB/RnfD family. As to quaternary structure, composed of six subunits; NqrA, NqrB, NqrC, NqrD, NqrE and NqrF. The cofactor is FMN.

Its subcellular location is the cell inner membrane. It catalyses the reaction a ubiquinone + n Na(+)(in) + NADH + H(+) = a ubiquinol + n Na(+)(out) + NAD(+). Functionally, NQR complex catalyzes the reduction of ubiquinone-1 to ubiquinol by two successive reactions, coupled with the transport of Na(+) ions from the cytoplasm to the periplasm. NqrA to NqrE are probably involved in the second step, the conversion of ubisemiquinone to ubiquinol. This is Na(+)-translocating NADH-quinone reductase subunit B from Neisseria meningitidis serogroup A / serotype 4A (strain DSM 15465 / Z2491).